Reading from the N-terminus, the 303-residue chain is Probable 5-dehydro-4-deoxyglucarate dehydratase (303 aa).

Belongs to the DapA family.

The enzyme catalyses 5-dehydro-4-deoxy-D-glucarate + H(+) = 2,5-dioxopentanoate + CO2 + H2O. It functions in the pathway carbohydrate acid metabolism; D-glucarate degradation; 2,5-dioxopentanoate from D-glucarate: step 2/2. The sequence is that of Probable 5-dehydro-4-deoxyglucarate dehydratase from Variovorax paradoxus (strain S110).